A 122-amino-acid polypeptide reads, in one-letter code: Guanine nucleotide exchange factor MSS4 homolog (122 aa).

One can recognise an MSS4 domain in the interval 9–120 (EQITDGKNKS…YLALKRVVHK (112 aa)). Zn(2+) is bound by residues Cys-22, Cys-25, Cys-92, and Cys-95.

This sequence belongs to the DSS4/MSS4 family. Interacts with Rab8.

The protein resides in the basal cell membrane. Guanine-nucleotide-releasing protein that acts on members of the sec4/ypt1/rab subfamily such as Rab8. During egg development, essential for establishing and maintaining epithelial cell polarity by regulating the correct polarized deposition of basal membrane (BM) proteins such as trol/Pcan and vkg/Coll IV to the basal surface of follicular epithelial (FE) cells. Likely to function by restricting the activity of the vesicle transport regulator Rab8 to the basal membrane, and thus directs BM protein-containing vesicles to the basal side of the FE cells. This function is independent of the Crag/Rab10 regulation of polarized BM protein secretion in the FE. The polypeptide is Guanine nucleotide exchange factor MSS4 homolog (Drosophila melanogaster (Fruit fly)).